The primary structure comprises 345 residues: Tropomodulin-4 (345 aa).

The interval 42–63 is disordered; sequence NMLLPAGLRQRDQTKKSPTGPL.

This sequence belongs to the tropomodulin family. Binds to the N-terminus of tropomyosin and to actin. Highly expressed in skeletal muscle.

It localises to the cytoplasm. The protein resides in the cytoskeleton. Functionally, blocks the elongation and depolymerization of the actin filaments at the pointed end. The Tmod/TM complex contributes to the formation of the short actin protofilament, which in turn defines the geometry of the membrane skeleton. The polypeptide is Tropomodulin-4 (TMOD4) (Homo sapiens (Human)).